We begin with the raw amino-acid sequence, 481 residues long: Zinc metalloproteinase/disintegrin (481 aa).

The first 20 residues, 1-20 (MIEVLLVTICLAVFPYQGSS), serve as a signal peptide directing secretion. A propeptide spanning residues 21 to 189 (IILESGNVND…KKASQLYLTP (169 aa)) is cleaved from the precursor. Pyrrolidone carboxylic acid (Glu) is present on Glu-190. Residues 197–392 (RYIKLAIVVD…DNPQCILNAP (196 aa)) enclose the Peptidase M12B domain. 296–299 (RNTI) contacts an L-amino acid tripeptide. Intrachain disulfides connect Cys-308–Cys-387, Cys-349–Cys-371, and Cys-351–Cys-354. Zn(2+) is bound at residue His-333. Glu-334 is an active-site residue. Positions 337 and 343 each coordinate Zn(2+). Ser-357 provides a ligand contact to an L-amino acid tripeptide. Residues 393–410 (LRTDTVSTPVSGNEFLEA) constitute a propeptide that is removed on maturation. The Disintegrin domain maps to 400-481 (TPVSGNEFLE…ADCPRNGLYG (82 aa)). 6 cysteine pairs are disulfide-bonded: Cys-414–Cys-429, Cys-416–Cys-424, Cys-423–Cys-446, Cys-437–Cys-443, Cys-442–Cys-467, and Cys-455–Cys-474. The short motif at 459–461 (RGD) is the Cell attachment site element.

The protein belongs to the venom metalloproteinase (M12B) family. P-II subfamily. P-IIa sub-subfamily. In terms of assembly, monomer. It depends on Zn(2+) as a cofactor. Post-translationally, the N-terminus is blocked. As to expression, expressed by the venom gland.

It localises to the secreted. With respect to regulation, inhibited by EDTA and 1,10-phenanthroline. Is also inhibited by endogenous tripeptide inhibitors pyroGlu-Asn-Trp, pyroGlu-Gln-Trp, and pyroGlu-Lys-Trp. Potent fibrinogenolytic protease which cleaves mainly the Aalpha chain of fibrinogen (FGA) and slightly the Bbeta (FGB) and the gamma (FGG) chains. May possess hemorrhagic activity. Compared to other SVMP, the substrate-binding pocket is relatively shallow. Is less susceptible to tripeptide inhibitors than TM-1 (AC U3KRG1) and TM-2. Functionally, inhibits platelet aggregation induced by ADP, thrombin, platelet-activating factor and collagen. Acts by inhibiting fibrinogen interaction with platelet receptors GPIIb/GPIIIa (ITGA2B/ITGB3). The polypeptide is Zinc metalloproteinase/disintegrin (Protobothrops mucrosquamatus (Taiwan habu)).